A 338-amino-acid chain; its full sequence is GTPase Obg (338 aa).

Residues 1 to 159 (MSFIDEVKIN…RWIRMELKLM (159 aa)) enclose the Obg domain. The segment at 58 to 79 (DLRQHPHQKAGRGKNGMGSDRH) is disordered. The OBG-type G domain maps to 160–331 (ADVGLLGMPS…LLDDIAFNLW (172 aa)). GTP-binding positions include 166–173 (GMPSVGKS), 191–195 (FTTLK), 213–216 (DIPG), 283–286 (NKID), and 312–314 (SAA). Mg(2+) is bound by residues Ser-173 and Thr-193.

It belongs to the TRAFAC class OBG-HflX-like GTPase superfamily. OBG GTPase family. In terms of assembly, monomer. It depends on Mg(2+) as a cofactor.

It localises to the cytoplasm. In terms of biological role, an essential GTPase which binds GTP, GDP and possibly (p)ppGpp with moderate affinity, with high nucleotide exchange rates and a fairly low GTP hydrolysis rate. Plays a role in control of the cell cycle, stress response, ribosome biogenesis and in those bacteria that undergo differentiation, in morphogenesis control. The chain is GTPase Obg from Citrifermentans bemidjiense (strain ATCC BAA-1014 / DSM 16622 / JCM 12645 / Bem) (Geobacter bemidjiensis).